Reading from the N-terminus, the 389-residue chain is tRNA pseudouridine synthase Pus10 (389 aa).

D213 functions as the Nucleophile in the catalytic mechanism. 2 residues coordinate substrate: Y278 and Y350.

Belongs to the pseudouridine synthase Pus10 family.

It carries out the reaction uridine(54) in tRNA = pseudouridine(54) in tRNA. The enzyme catalyses uridine(55) in tRNA = pseudouridine(55) in tRNA. Responsible for synthesis of pseudouridine from uracil-54 and uracil-55 in the psi GC loop of transfer RNAs. The protein is tRNA pseudouridine synthase Pus10 of Thermoplasma acidophilum (strain ATCC 25905 / DSM 1728 / JCM 9062 / NBRC 15155 / AMRC-C165).